We begin with the raw amino-acid sequence, 265 residues long: Seminal vesicle secretory protein 3A (265 aa).

The first 20 residues, 1–20 (MKSIFFSLSLLLLLEKKAAG), serve as a signal peptide directing secretion. A run of 5 repeats spans residues 116-119 (QIKS), 122-125 (QVKS), 129-132 (QLKS), 136-139 (QLKT), and 142-145 (QVKS). Positions 116–145 (QIKSQTQVKSYAAQLKSQPGQLKTIGQVKS) are 5 X 4 AA tandem repeats of Q-X-K-[ST].

Post-translationally, glycosylated. In terms of processing, covalently cross-linked by transglutaminase, which is important for the formation of the gelatinous copulatory plug. Five repeats of Q-X-K-(S/T) in the central region of the protein serve as the transglutaminase substrate site(s). In terms of tissue distribution, highly expressed in the seminal vesicle where it is detected in luminal epithelium of the mucosa folds, and also in luminal fluid (at protein level). Not detected in other tissues tested.

It is found in the secreted. In terms of biological role, component of the copulatory plug. In Mus musculus (Mouse), this protein is Seminal vesicle secretory protein 3A.